The sequence spans 429 residues: Putative zinc metalloprotease aq_1964 (429 aa).

His-17 lines the Zn(2+) pocket. Glu-18 is an active-site residue. His-21 contacts Zn(2+). A helical transmembrane segment spans residues Ile-88–Tyr-110. The 77-residue stretch at Thr-189 to Gly-265 folds into the PDZ domain. A run of 2 helical transmembrane segments spans residues Ile-369–Leu-391 and Arg-406–Leu-428.

Belongs to the peptidase M50B family. The cofactor is Zn(2+).

It is found in the cell inner membrane. This chain is Putative zinc metalloprotease aq_1964, found in Aquifex aeolicus (strain VF5).